We begin with the raw amino-acid sequence, 410 residues long: Secreted protein PRY1 (410 aa).

Positions 1–20 (MKQNYILSIILCYLLANVHS) are cleaved as a signal peptide. Disordered regions lie at residues 64 to 86 (PAPV…STPS), 102 to 132 (SDSD…SSSS), and 148 to 260 (SSSS…SSSS). A compositionally biased stretch (low complexity) spans 148 to 179 (SSSSTPSSISQQQQQQQGSPASGSNSPNSAQP). The segment covering 197–211 (SGLGSGFGSGFGSGS) has biased composition (gly residues). Residues 212–260 (GSDSDSGSGLPSASSSTIIQQQPSSSNIGSSSTSSSSSSSSSSSSSSSS) show a composition bias toward low complexity. The SCP domain occupies 283–394 (LDAHNKYRAQ…NWGLYVVCEY (112 aa)).

The protein belongs to the CRISP family.

It is found in the secreted. Secreted protein that acts as a virulence factor during infections. The sequence is that of Secreted protein PRY1 (PRY1) from Candida albicans (strain SC5314 / ATCC MYA-2876) (Yeast).